We begin with the raw amino-acid sequence, 99 residues long: A-type ATP synthase subunit F (99 aa).

The protein belongs to the V-ATPase F subunit family. In terms of assembly, has multiple subunits with at least A(3), B(3), C, D, E, F, H, I and proteolipid K(x).

It localises to the cell membrane. Component of the A-type ATP synthase that produces ATP from ADP in the presence of a proton gradient across the membrane. The protein is A-type ATP synthase subunit F of Methanothrix thermoacetophila (strain DSM 6194 / JCM 14653 / NBRC 101360 / PT) (Methanosaeta thermophila).